A 68-amino-acid polypeptide reads, in one-letter code: Conotoxin Cal14.13b (68 aa).

The signal sequence occupies residues 1 to 20; it reads MKLCVVIVLLMLAMPFNGGE. The propeptide occupies 21 to 68; it reads ASRFFNQHARSQRSGMKTRGIWCDPPCPEGETCRGGECSDEFNGDMGR. The residue at position 66 (Met-66) is a Methionine amide.

In terms of processing, contains 2 disulfide bonds. As to expression, expressed by the venom duct.

Its subcellular location is the secreted. Probable neurotoxin with unknown target. Possibly targets ion channels. This Californiconus californicus (California cone) protein is Conotoxin Cal14.13b.